We begin with the raw amino-acid sequence, 880 residues long: Leucine--tRNA ligase (880 aa).

The short motif at 46 to 56 is the 'HIGH' region element; it reads PYPSGALHMGH. A 'KMSKS' region motif is present at residues 638 to 642; it reads KMSKS. Residue lysine 641 coordinates ATP.

Belongs to the class-I aminoacyl-tRNA synthetase family.

It is found in the cytoplasm. It carries out the reaction tRNA(Leu) + L-leucine + ATP = L-leucyl-tRNA(Leu) + AMP + diphosphate. The chain is Leucine--tRNA ligase from Xanthomonas axonopodis pv. citri (strain 306).